Here is a 71-residue protein sequence, read N- to C-terminus: UPF0499 protein ACLA_083080 (71 aa).

The N-terminal stretch at 1–18 is a signal peptide; sequence MKFLNILTLAFITGMASA. 3 disulfides stabilise this stretch: Cys-44-Cys-58, Cys-48-Cys-61, and Cys-54-Cys-68.

Belongs to the UPF0499 family.

The protein localises to the secreted. The protein is UPF0499 protein ACLA_083080 of Aspergillus clavatus (strain ATCC 1007 / CBS 513.65 / DSM 816 / NCTC 3887 / NRRL 1 / QM 1276 / 107).